A 355-amino-acid polypeptide reads, in one-letter code: Guanine nucleotide-binding protein G(i) subunit alpha-2 (355 aa).

G2 is lipidated: N-myristoyl glycine. Residue C3 is the site of S-palmitoyl cysteine attachment. Residues 32 to 355 form the G-alpha domain; the sequence is REVKLLLLGA…KNNLKDCGLF (324 aa). A G1 motif region spans residues 35–48; it reads KLLLLGAGESGKST. Residues 40 to 47, 176 to 182, 201 to 205, 270 to 273, and A327 contribute to the GTP site; these read GAGESGKS, LRTRVKT, DVGGQ, and NKKD. Mg(2+)-binding residues include S47 and T182. The G2 motif stretch occupies residues 174-182; that stretch reads DVLRTRVKT. Residues 197–206 form a G3 motif region; the sequence is FKMFDVGGQR. The tract at residues 266 to 273 is G4 motif; sequence ILFLNKKD. A G5 motif region spans residues 325-330; that stretch reads TCATDT.

The protein belongs to the G-alpha family. G(i/o/t/z) subfamily. In terms of assembly, g proteins are composed of 3 units; alpha, beta and gamma. The alpha chain contains the guanine nucleotide binding site. In this context, interacts with GNB2. Interacts with UNC5B. Interacts with GPSM1. Interacts with RGS12 and RGS14. Interacts (inactive GDP-bound form) with NUCB1 (via GBA motif); the interaction leads to activation of GNAI3. Interacts (inactive GDP-bound form) with CCDC88C/DAPLE (via GBA motif). Interacts (inactive GDP-bound form) with CCDC8A/GIV (via GBA motif). Interacts with CXCR1 and CXCR2.

It localises to the cytoplasm. The protein resides in the cytoskeleton. Its subcellular location is the microtubule organizing center. The protein localises to the centrosome. It is found in the cell membrane. It localises to the membrane. In terms of biological role, guanine nucleotide-binding proteins (G proteins) are involved as modulators or transducers in various transmembrane signaling systems. The G(i) proteins are involved in hormonal regulation of adenylate cyclase: they inhibit the cyclase in response to beta-adrenergic stimuli. May play a role in cell division. In Mus musculus (Mouse), this protein is Guanine nucleotide-binding protein G(i) subunit alpha-2 (Gnai2).